We begin with the raw amino-acid sequence, 603 residues long: MASAPTSKYNSHSLENESIKRTSRDGVNRDVGETLPRLPGEIRITDKEVIYICPFNGPIKGRVYITNYRLYLRSLETDSALILDVPLGVISRIEKMGGATSRGENSYGLDITCKDLRNLRFALKQEGHSRRDMFEILTRYAFPLAHSLPIFAFLNEEKFNVDGWTVYNPVEEYRRQGLPNHHWRITFINKCYKLCDTYPALLVVPYRASDEDLRRVATFRSRNRIPVLSWIHPENKTVIVRCSQPLVGMSGKRNKEDERYLDVIRETNRQVNKLTIYDARPNVNAVANKATGGGYESDDVYHNAELFFLDIHNIHVMRESLKKVKDIVYPNVEESHWLSSLESTHWLEHIKLVLTGAIQVADRVSSGKSSVVVHCSDGWDRTAQLTSLAMLMLDSFYRSIEGFEILVQKEWISFGHKFASRIGHGDKNHADADRSPIFLQFIDCVWQMSKQFPTAFEFNERFLITILDHLYSCRFGTFLYNCESAREKQKVTERTVSLWSLINSNKDKFKNPFYTKEINRVLYPVASMRHLELWVNYYIRWNPRIKQQQPNPVEQRYMELLALRDEYIKRLDELQLANSAKLSDPSASPSSPSQMMPHVQTHF.

The segment covering 1–13 (MASAPTSKYNSHS) has biased composition (polar residues). A disordered region spans residues 1–32 (MASAPTSKYNSHSLENESIKRTSRDGVNRDVG). Phosphoserine is present on residues serine 13 and serine 18. The span at 14–32 (LENESIKRTSRDGVNRDVG) shows a compositional bias: basic and acidic residues. Residues 29 to 97 (RDVGETLPRL…GVISRIEKMG (69 aa)) form the GRAM domain. In terms of domain architecture, Myotubularin phosphatase spans 163–538 (GWTVYNPVEE…RHLELWVNYY (376 aa)). Positions 288, 313, and 314 each coordinate a 1,2-diacyl-sn-glycero-3-phospho-(1D-myo-inositol-3,5-bisphosphate). A 1,2-diacyl-sn-glycero-3-phospho-(1D-myo-inositol-3-phosphate) is bound by residues asparagine 288, asparagine 313, and isoleucine 314. The active-site Phosphocysteine intermediate is the cysteine 375. Residues serine 376, aspartate 377, glycine 378, tryptophan 379, aspartate 380, arginine 381, lysine 417, and arginine 421 each contribute to the a 1,2-diacyl-sn-glycero-3-phospho-(1D-myo-inositol-3,5-bisphosphate) site. Residues serine 376, aspartate 377, glycine 378, tryptophan 379, aspartate 380, and arginine 381 each contribute to the a 1,2-diacyl-sn-glycero-3-phospho-(1D-myo-inositol-3-phosphate) site. Arginine 421 is a binding site for a 1,2-diacyl-sn-glycero-3-phospho-(1D-myo-inositol-3-phosphate). Threonine 495 carries the phosphothreonine modification. The disordered stretch occupies residues 580–603 (AKLSDPSASPSSPSQMMPHVQTHF). Low complexity predominate over residues 583-593 (SDPSASPSSPS). Serine 588 carries the post-translational modification Phosphoserine.

This sequence belongs to the protein-tyrosine phosphatase family. Non-receptor class myotubularin subfamily. As to quaternary structure, heterodimer with MTMR12. Interacts with KMT2A/MLL1 (via SET domain). Interacts with DES in skeletal muscle but not in cardiac muscle. Interacts with SPEG.

The protein localises to the cytoplasm. The protein resides in the cell membrane. Its subcellular location is the cell projection. It localises to the filopodium. It is found in the ruffle. The protein localises to the late endosome. The protein resides in the myofibril. Its subcellular location is the sarcomere. The catalysed reaction is a 1,2-diacyl-sn-glycero-3-phospho-(1D-myo-inositol-3-phosphate) + H2O = a 1,2-diacyl-sn-glycero-3-phospho-(1D-myo-inositol) + phosphate. It catalyses the reaction a 1,2-diacyl-sn-glycero-3-phospho-(1D-myo-inositol-3,5-bisphosphate) + H2O = a 1,2-diacyl-sn-glycero-3-phospho-(1D-myo-inositol-5-phosphate) + phosphate. The enzyme catalyses 1,2-dioctanoyl-sn-glycero-3-phospho-(1-D-myo-inositol-3-phosphate) + H2O = 1,2-dioctanoyl-sn-glycero-3-phospho-(1D-myo-inositol) + phosphate. It carries out the reaction 1,2-dioctanoyl-sn-glycero-3-phospho-(1D-myo-inositol-3,5-bisphosphate) + H2O = 1,2-dioctanoyl-sn-glycero-3-phospho-(1D-myo-inositol-5-phosphate) + phosphate. The catalysed reaction is 1,2-dihexadecanoyl-sn-glycero-3-phospho-(1D-myo-inositol-3,5-phosphate) + H2O = 1,2-dihexadecanoyl-sn-glycero-3-phospho-(1D-myo-inositol-5-phosphate) + phosphate. With respect to regulation, allosterically activated by phosphatidylinositol 5-phosphate (PI5P). In terms of biological role, lipid phosphatase which dephosphorylates phosphatidylinositol 3-monophosphate (PI3P) and phosphatidylinositol 3,5-bisphosphate (PI(3,5)P2). Has also been shown to dephosphorylate phosphotyrosine- and phosphoserine-containing peptides. Negatively regulates EGFR degradation through regulation of EGFR trafficking from the late endosome to the lysosome. Plays a role in vacuolar formation and morphology. Regulates desmin intermediate filament assembly and architecture. Plays a role in mitochondrial morphology and positioning. Required for skeletal muscle maintenance but not for myogenesis. In skeletal muscles, stabilizes MTMR12 protein levels. In Bos taurus (Bovine), this protein is Myotubularin.